The chain runs to 337 residues: Holliday junction branch migration complex subunit RuvB (337 aa).

The interval 4 to 184 is large ATPase domain (RuvB-L); it reads ADRLIEPIAS…FGIVQRLEFY (181 aa). ATP is bound by residues isoleucine 23, arginine 24, glycine 65, lysine 68, threonine 69, threonine 70, 131–133, arginine 174, tyrosine 184, and arginine 221; that span reads EDY. Threonine 69 serves as a coordination point for Mg(2+). The small ATPAse domain (RuvB-S) stretch occupies residues 185 to 255; it reads NVADLSTIVS…TAAAALDMLE (71 aa). A head domain (RuvB-H) region spans residues 258–337; sequence SEGFDIMDRK…FGITKDQTKD (80 aa). The DNA site is built by arginine 294, arginine 313, and arginine 318.

It belongs to the RuvB family. Homohexamer. Forms an RuvA(8)-RuvB(12)-Holliday junction (HJ) complex. HJ DNA is sandwiched between 2 RuvA tetramers; dsDNA enters through RuvA and exits via RuvB. An RuvB hexamer assembles on each DNA strand where it exits the tetramer. Each RuvB hexamer is contacted by two RuvA subunits (via domain III) on 2 adjacent RuvB subunits; this complex drives branch migration. In the full resolvosome a probable DNA-RuvA(4)-RuvB(12)-RuvC(2) complex forms which resolves the HJ.

Its subcellular location is the cytoplasm. It catalyses the reaction ATP + H2O = ADP + phosphate + H(+). In terms of biological role, the RuvA-RuvB-RuvC complex processes Holliday junction (HJ) DNA during genetic recombination and DNA repair, while the RuvA-RuvB complex plays an important role in the rescue of blocked DNA replication forks via replication fork reversal (RFR). RuvA specifically binds to HJ cruciform DNA, conferring on it an open structure. The RuvB hexamer acts as an ATP-dependent pump, pulling dsDNA into and through the RuvAB complex. RuvB forms 2 homohexamers on either side of HJ DNA bound by 1 or 2 RuvA tetramers; 4 subunits per hexamer contact DNA at a time. Coordinated motions by a converter formed by DNA-disengaged RuvB subunits stimulates ATP hydrolysis and nucleotide exchange. Immobilization of the converter enables RuvB to convert the ATP-contained energy into a lever motion, pulling 2 nucleotides of DNA out of the RuvA tetramer per ATP hydrolyzed, thus driving DNA branch migration. The RuvB motors rotate together with the DNA substrate, which together with the progressing nucleotide cycle form the mechanistic basis for DNA recombination by continuous HJ branch migration. Branch migration allows RuvC to scan DNA until it finds its consensus sequence, where it cleaves and resolves cruciform DNA. The polypeptide is Holliday junction branch migration complex subunit RuvB (Colwellia psychrerythraea (strain 34H / ATCC BAA-681) (Vibrio psychroerythus)).